Consider the following 1119-residue polypeptide: Nuclear matrix constituent protein 1 (1119 aa).

2 coiled-coil regions span residues 140 to 226 and 328 to 488; these read LAEL…LYQQ and LQNR…LDER. Disordered stretches follow at residues 846–884, 903–974, 989–1015, and 1046–1109; these read LDVEDSQQSDVRAGNRKPGKRAKGRVRRKRSAKEVAEEA, LASA…PTGR, NGALSDPNKGKEKEIDDGGGIGEEIPD, and GINA…EVSM. Composition is skewed to basic residues over residues 859–876 and 920–929; these read GNRKPGKRAKGRVRRKRS and KRTRNSRKRN. The span at 1075–1085 shows a compositional bias: polar residues; sequence TPEQSRGYQNQ.

The protein belongs to the CRWN family.

The protein resides in the nucleus matrix. The protein localises to the nucleus lamina. In terms of biological role, architectural component of nuclear structure that plays different roles in controlling nuclear size and morphology. In Daucus carota subsp. sativus (Carrot), this protein is Nuclear matrix constituent protein 1.